The sequence spans 403 residues: MGLKAYLEKIEPNFEAGGKYEKWYALYEAAATIFYTPGKVNKAGTHVRDSIDLKRIMIMVWAATFPAMFYGMYNIGQQAHNVILNGGASLPDMWQAALFTALGGQIGLESTGGLAMFLYGACFFLPIYAVTFIVGGFWEVLFASVRKHEVNEGFFVTSVLFALTLPATIPLWQVALGITFGVVIAKEVFGGTGRNFLNPALSGRAFLYFAYPAQISGDAIWTAADGFSGATWLSQAAAGNVTDWSLNADWWDAFFGNIQGSVGEVSSLAILLGGLFIIYMRIASWRIVLGVLLGGAVFSTLLNVIGSDTNAMFAMPWYWHVVTGGFAFGMFFMATDPVSASFTNSAKWAYGFLIGLMCVLIRVLNPAFPEGMMLAILFANLWAPLFDYFVAQSNIKRRMARVG.

3 helical membrane-spanning segments follow: residues 56-76 (IMIM…YNIG), 114-134 (LAMF…TFIV), and 165-185 (LPAT…VVIA). T231 is modified (FMN phosphoryl threonine). Transmembrane regions (helical) follow at residues 260-280 (GSVG…IIYM), 287-307 (IVLG…VIGS), 312-332 (MFAM…GMFF), 348-368 (WAYG…NPAF), and 371-391 (GMML…YFVA).

Belongs to the NqrB/RnfD family. In terms of assembly, composed of six subunits; NqrA, NqrB, NqrC, NqrD, NqrE and NqrF. The cofactor is FMN.

The protein resides in the cell inner membrane. It carries out the reaction a ubiquinone + n Na(+)(in) + NADH + H(+) = a ubiquinol + n Na(+)(out) + NAD(+). In terms of biological role, NQR complex catalyzes the reduction of ubiquinone-1 to ubiquinol by two successive reactions, coupled with the transport of Na(+) ions from the cytoplasm to the periplasm. NqrA to NqrE are probably involved in the second step, the conversion of ubisemiquinone to ubiquinol. In Pseudoalteromonas atlantica (strain T6c / ATCC BAA-1087), this protein is Na(+)-translocating NADH-quinone reductase subunit B.